The chain runs to 713 residues: U3 small nucleolar RNA-associated protein 8 (713 aa).

Thr95 is subject to Phosphothreonine. Phosphoserine occurs at positions 148 and 150.

As to quaternary structure, interacts with snoRNA U3. Interacts with MPP10 and UTP25. Component of the ribosomal small subunit (SSU) processome composed of at least 40 protein subunits and snoRNA U3. In the absence of snoRNA3, forms a complex with other t-UTPs. This complex can associate with pre-18S ribosomal RNAs.

Its subcellular location is the nucleus. The protein resides in the nucleolus. Functionally, involved in nucleolar processing of pre-18S ribosomal RNA. Also has a role in nuclear tRNA export. It acts between the steps of tRNA maturation/aminoacylation and its subsequent translocation out of the nucleus. Required for optimal pre-ribosomal RNA transcription by RNA polymerase I together with a subset of U3 proteins required for transcription (t-UTPs). This is U3 small nucleolar RNA-associated protein 8 (UTP8) from Saccharomyces cerevisiae (strain ATCC 204508 / S288c) (Baker's yeast).